A 342-amino-acid polypeptide reads, in one-letter code: Inositol 2-dehydrogenase 2 (342 aa).

The protein belongs to the Gfo/Idh/MocA family. In terms of assembly, homotetramer.

It carries out the reaction myo-inositol + NAD(+) = scyllo-inosose + NADH + H(+). Functionally, involved in the oxidation of myo-inositol (MI) to 2-keto-myo-inositol (2KMI or 2-inosose). The protein is Inositol 2-dehydrogenase 2 of Mycolicibacterium vanbaalenii (strain DSM 7251 / JCM 13017 / BCRC 16820 / KCTC 9966 / NRRL B-24157 / PYR-1) (Mycobacterium vanbaalenii).